Consider the following 308-residue polypeptide: Ribonuclease HIII (308 aa).

The RNase H type-2 domain maps to 92–308 (DNHIGSDEAG…ANTQKAQKLL (217 aa)). Residues Asp-98, Glu-99, and Asp-204 each contribute to the a divalent metal cation site.

The protein belongs to the RNase HII family. RnhC subfamily. The cofactor is Mn(2+). Mg(2+) is required as a cofactor.

It is found in the cytoplasm. The enzyme catalyses Endonucleolytic cleavage to 5'-phosphomonoester.. Functionally, endonuclease that specifically degrades the RNA of RNA-DNA hybrids. This Oceanobacillus iheyensis (strain DSM 14371 / CIP 107618 / JCM 11309 / KCTC 3954 / HTE831) protein is Ribonuclease HIII.